Here is a 342-residue protein sequence, read N- to C-terminus: Ribosomal RNA small subunit methyltransferase C (342 aa).

Belongs to the methyltransferase superfamily. RsmC family. As to quaternary structure, monomer.

It is found in the cytoplasm. The catalysed reaction is guanosine(1207) in 16S rRNA + S-adenosyl-L-methionine = N(2)-methylguanosine(1207) in 16S rRNA + S-adenosyl-L-homocysteine + H(+). In terms of biological role, specifically methylates the guanine in position 1207 of 16S rRNA in the 30S particle. This chain is Ribosomal RNA small subunit methyltransferase C, found in Salmonella heidelberg (strain SL476).